The sequence spans 428 residues: Peptidase B (428 aa).

Mn(2+)-binding residues include Lys195 and Asp200. Lys207 is a catalytic residue. Asp218, Asp277, and Glu279 together coordinate Mn(2+). Residue Arg281 is part of the active site.

The protein belongs to the peptidase M17 family. Homohexamer. It depends on Mn(2+) as a cofactor.

It localises to the cytoplasm. The catalysed reaction is Release of an N-terminal amino acid, Xaa, from a peptide or arylamide. Xaa is preferably Glu or Asp but may be other amino acids, including Leu, Met, His, Cys and Gln.. Functionally, probably plays an important role in intracellular peptide degradation. The sequence is that of Peptidase B from Klebsiella pneumoniae (strain 342).